A 626-amino-acid chain; its full sequence is KSFFRSLVAASLVIVSYSADTTSVPFDAESRDQIFQHHARSVISGYTNTLGEKNISVPSSPPGGERVGILGAGIGGLYSALILQSLDVPFEIIEASNRVGGRLFTHKFPNGGKYDYYDVGAMRYPLPKSDDKGNYQPGVMQRVGQLFTYLGMHKQLIPYYFKSNKSPGFQYFNGVRARIGEGSSFDAPALGINSSLIDIGVTKIVNDAVGPFAQALFDDLQKHTTTGWDDMMKNDAYSTRSYFSFKYLPSPSFGLPSEHFSTRVINWLETFDKSTGWYDRGLTETVLEAIAFGEVGDGEVDWRCIDGGSHVLPDTIAAFLHKKGGNAFVMNASVTAIGLENPNKEDSPMVVVAGGQKRKYSHVISTLPLPVLRTVDLKNSKLDIVQSNALRKLQYGPSIKIGILFKEPWWTTGQDKNGEKFDLVGGQSYTDLPIRTVVYPSYGVNTNAPSNTLIASYCWTNDAERMGSLIGTGKKTYEEQLEHLVLSNLAAVHNTDYQYLKDRLVDVHSWDWNHNPLTMGAFAFFGPGDFQDLYTSLNRPAANGKLHFAGEALSVRHAWVVGALDSAWRAVYNYLYVTDPAKLPKFFELWGKNAEWFEQPGDGKEPNSDNSLLEKFVRRTHGTVSV.

The first 18 residues, 1 to 18, serve as a signal peptide directing secretion; that stretch reads KSFFRSLVAASLVIVSYS. A glycan (N-linked (GlcNAc...) asparagine) is linked at N54. FAD contacts are provided by G75, E94, A95, R102, M122, and R123. R123 contacts L-glutamate. Residue R123 coordinates L-glutamine. Position 123 (R123) interacts with L-lysine. R123 is an L-phenylalanine binding site. N-linked (GlcNAc...) asparagine glycans are attached at residues N164, N193, and N331. V334 lines the FAD pocket. Y457 contacts L-glutamate. Y457 serves as a coordination point for L-glutamine. An L-lysine-binding site is contributed by Y457. Y457 contacts L-phenylalanine. Residue E551 participates in FAD binding. A558 is an L-phenylalanine binding site. FAD contacts are provided by W559 and V560.

Belongs to the flavin monoamine oxidase family. FIG1 subfamily. As to quaternary structure, homodimer. It depends on FAD as a cofactor. Post-translationally, out of the 4 glycosylated residues, Asn-54 is hypermannosylated. The presence of a hypermannosylated N-glycan on Asn-54 leads to adoption of a more active conformation in the absence of acid activation.

It is found in the secreted. The enzyme catalyses an L-alpha-amino acid + O2 + H2O = a 2-oxocarboxylate + H2O2 + NH4(+). The catalysed reaction is L-lysine + O2 + H2O = 6-amino-2-oxohexanoate + H2O2 + NH4(+). It catalyses the reaction L-glutamate + O2 + H2O = H2O2 + 2-oxoglutarate + NH4(+). It carries out the reaction L-arginine + O2 + H2O = 5-guanidino-2-oxopentanoate + H2O2 + NH4(+). The enzyme catalyses L-leucine + O2 + H2O = 4-methyl-2-oxopentanoate + H2O2 + NH4(+). The catalysed reaction is L-asparagine + O2 + H2O = 2-oxosuccinamate + H2O2 + NH4(+). It catalyses the reaction L-histidine + O2 + H2O = 3-(imidazol-5-yl)pyruvate + H2O2 + NH4(+). It carries out the reaction L-isoleucine + O2 + H2O = (S)-3-methyl-2-oxopentanoate + H2O2 + NH4(+). The enzyme catalyses L-methionine + O2 + H2O = 4-methylsulfanyl-2-oxobutanoate + H2O2 + NH4(+). The catalysed reaction is L-phenylalanine + O2 + H2O = 3-phenylpyruvate + H2O2 + NH4(+). It catalyses the reaction L-tyrosine + O2 + H2O = 3-(4-hydroxyphenyl)pyruvate + H2O2 + NH4(+). It carries out the reaction L-glutamine + O2 + H2O = 2-oxoglutaramate + H2O2 + NH4(+). The enzyme catalyses L-alanine + O2 + H2O = pyruvate + H2O2 + NH4(+). With respect to regulation, LAAO4 is activated by exposure to acidic pH, the detergent sodium dodecyl sulfate, or freezing. In terms of biological role, catalyzes the oxidative deamination of L-amino acids with molecular oxygen to the corresponding alpha-keto acids and ammonia. L-glutamine shows the highest relative activity but LAAO4 has a broad substrate specificity, including L-amino acids with big aromatic, acidic and basic side chains. Methyl esters of these L-amino acids are also accepted, ethyl esters are converted but with lower activity, whereas D-Amino acids are not converted. No reaction is detected for small polar amino acids such as L-cysteine or L-aspartate, and very little for small, branched hydrophobic amino acids like L-valine. The chain is L-amino-acid oxidase 4 from Hebeloma cylindrosporum.